The sequence spans 307 residues: Deaminated glutathione amidase, chloroplastic/cytosolic (307 aa).

The transit peptide at 1–36 (MNAYSVSLDFTKPSLFTRITLSSQIPLTMATTVNKT) directs the protein to the chloroplast. A CN hydrolase domain is found at 37 to 286 (VRVAAAQMTS…TGIVVADIDF (250 aa)). Glu76 functions as the Proton acceptor in the catalytic mechanism. Lys147 acts as the Proton donor in catalysis. The active-site Nucleophile is Cys188.

The protein belongs to the nitrilase superfamily. NIT1/NIT2 family.

The protein localises to the plastid. Its subcellular location is the chloroplast. The protein resides in the cytoplasm. The enzyme catalyses N-(4-oxoglutaryl)-L-cysteinylglycine + H2O = L-cysteinylglycine + 2-oxoglutarate. It carries out the reaction N-(4-carboxy-4-oxobutanoyl)-L-ethylglycylglycine + H2O = N-(2-aminobutanoyl)glycine + 2-oxoglutarate. Functionally, catalyzes the hydrolysis of the amide bond in N-(4-oxoglutarate)-L-cysteinylglycine (deaminated glutathione), a metabolite repair reaction to dispose of the harmful deaminated glutathione. Possesses amidase activity toward deaminated ophthalmate in vitro. In Arabidopsis thaliana (Mouse-ear cress), this protein is Deaminated glutathione amidase, chloroplastic/cytosolic.